The sequence spans 430 residues: Enolase (430 aa).

Gln163 contacts (2R)-2-phosphoglycerate. Glu205 functions as the Proton donor in the catalytic mechanism. Mg(2+) contacts are provided by Asp242, Glu287, and Asp314. Lys339, Arg368, Ser369, and Lys390 together coordinate (2R)-2-phosphoglycerate. Lys339 functions as the Proton acceptor in the catalytic mechanism.

The protein belongs to the enolase family. It depends on Mg(2+) as a cofactor.

It localises to the cytoplasm. The protein resides in the secreted. It is found in the cell surface. It catalyses the reaction (2R)-2-phosphoglycerate = phosphoenolpyruvate + H2O. Its pathway is carbohydrate degradation; glycolysis; pyruvate from D-glyceraldehyde 3-phosphate: step 4/5. Catalyzes the reversible conversion of 2-phosphoglycerate (2-PG) into phosphoenolpyruvate (PEP). It is essential for the degradation of carbohydrates via glycolysis. In Exiguobacterium sibiricum (strain DSM 17290 / CCUG 55495 / CIP 109462 / JCM 13490 / 255-15), this protein is Enolase.